The primary structure comprises 89 residues: Small ribosomal subunit protein uS15 (89 aa).

This sequence belongs to the universal ribosomal protein uS15 family. Part of the 30S ribosomal subunit. Forms a bridge to the 50S subunit in the 70S ribosome, contacting the 23S rRNA.

Its function is as follows. One of the primary rRNA binding proteins, it binds directly to 16S rRNA where it helps nucleate assembly of the platform of the 30S subunit by binding and bridging several RNA helices of the 16S rRNA. Functionally, forms an intersubunit bridge (bridge B4) with the 23S rRNA of the 50S subunit in the ribosome. The polypeptide is Small ribosomal subunit protein uS15 (Crocosphaera subtropica (strain ATCC 51142 / BH68) (Cyanothece sp. (strain ATCC 51142))).